Reading from the N-terminus, the 254-residue chain is MTPGIRPLVAGNWKMNGKGESLTELRAIAAGLSSDLGRKLDAVICVPATLLSRAAETLEGETVGLGGQDAHFKTSGAHTGDISPEMLKEAGATHVILGHSERRTDHHESNKLICAKTEAAWAAGLVAIVCVGETASERKAERALDVIGDQLSGSLPDGVTAENTIIAYEPIWAIGTGLTPTVQDVRAAHAFMREQLIERFGAKGAHLRLLYGGSVKPSNAAELLGVADVDGALVGGASLKAADFLAICETYRNL.

12–14 (NWK) lines the substrate pocket. Residue histidine 99 is the Electrophile of the active site. Glutamate 169 (proton acceptor) is an active-site residue. Substrate contacts are provided by residues glycine 175, serine 214, and 235–236 (GG).

It belongs to the triosephosphate isomerase family. Homodimer.

It is found in the cytoplasm. The enzyme catalyses D-glyceraldehyde 3-phosphate = dihydroxyacetone phosphate. It participates in carbohydrate biosynthesis; gluconeogenesis. Its pathway is carbohydrate degradation; glycolysis; D-glyceraldehyde 3-phosphate from glycerone phosphate: step 1/1. Involved in the gluconeogenesis. Catalyzes stereospecifically the conversion of dihydroxyacetone phosphate (DHAP) to D-glyceraldehyde-3-phosphate (G3P). In Brucella melitensis biotype 1 (strain ATCC 23456 / CCUG 17765 / NCTC 10094 / 16M), this protein is Triosephosphate isomerase.